The chain runs to 478 residues: Cysteine--tRNA ligase (478 aa).

Residue cysteine 27 participates in Zn(2+) binding. A 'HIGH' region motif is present at residues proline 29–asparagine 39. Zn(2+) contacts are provided by cysteine 207, histidine 232, and glutamate 236. The short motif at lysine 264–serine 268 is the 'KMSKS' region element. Lysine 267 is an ATP binding site.

Belongs to the class-I aminoacyl-tRNA synthetase family. In terms of assembly, monomer. Requires Zn(2+) as cofactor.

The protein localises to the cytoplasm. It carries out the reaction tRNA(Cys) + L-cysteine + ATP = L-cysteinyl-tRNA(Cys) + AMP + diphosphate. The protein is Cysteine--tRNA ligase of Desulforudis audaxviator (strain MP104C).